We begin with the raw amino-acid sequence, 150 residues long: 3-hydroxyacyl-[acyl-carrier-protein] dehydratase FabZ (150 aa).

The active site involves His-57.

Belongs to the thioester dehydratase family. FabZ subfamily.

It is found in the cytoplasm. The catalysed reaction is a (3R)-hydroxyacyl-[ACP] = a (2E)-enoyl-[ACP] + H2O. Its function is as follows. Involved in unsaturated fatty acids biosynthesis. Catalyzes the dehydration of short chain beta-hydroxyacyl-ACPs and long chain saturated and unsaturated beta-hydroxyacyl-ACPs. This Mannheimia succiniciproducens (strain KCTC 0769BP / MBEL55E) protein is 3-hydroxyacyl-[acyl-carrier-protein] dehydratase FabZ.